The chain runs to 388 residues: Protein TsgA homolog (388 aa).

A run of 12 helical transmembrane segments spans residues 12–32, 51–71, 77–97, 102–122, 137–157, 163–183, 203–223, 246–266, 272–292, 294–314, 331–351, and 356–376; these read CISF…GIFL, TFLN…TNII, LIFG…SHNL, ISMF…TYII, LTDS…ALII, WYWV…ITIN, FSIL…LSFI, SAFW…LKFF, IITL…FYDY, LLYI…TIII, YILT…GPIV, and IFSA…LVII.

The protein belongs to the major facilitator superfamily. TsgA family.

Its subcellular location is the cell membrane. This chain is Protein TsgA homolog, found in Buchnera aphidicola subsp. Baizongia pistaciae (strain Bp).